We begin with the raw amino-acid sequence, 290 residues long: Shikimate dehydrogenase (NADP(+)) (290 aa).

Residues serine 22 to serine 24 and threonine 68 each bind shikimate. The active-site Proton acceptor is lysine 72. Shikimate-binding residues include asparagine 93 and aspartate 108. NADP(+) is bound by residues glycine 133–serine 137 and isoleucine 228. Tyrosine 230 is a shikimate binding site. Residue glycine 251 participates in NADP(+) binding.

The protein belongs to the shikimate dehydrogenase family. As to quaternary structure, homodimer.

It catalyses the reaction shikimate + NADP(+) = 3-dehydroshikimate + NADPH + H(+). Its pathway is metabolic intermediate biosynthesis; chorismate biosynthesis; chorismate from D-erythrose 4-phosphate and phosphoenolpyruvate: step 4/7. Involved in the biosynthesis of the chorismate, which leads to the biosynthesis of aromatic amino acids. Catalyzes the reversible NADPH linked reduction of 3-dehydroshikimate (DHSA) to yield shikimate (SA). The sequence is that of Shikimate dehydrogenase (NADP(+)) from Leptospira borgpetersenii serovar Hardjo-bovis (strain JB197).